The chain runs to 81 residues: Small ribosomal subunit protein bS18 (81 aa).

It belongs to the bacterial ribosomal protein bS18 family. As to quaternary structure, part of the 30S ribosomal subunit. Forms a tight heterodimer with protein bS6.

Binds as a heterodimer with protein bS6 to the central domain of the 16S rRNA, where it helps stabilize the platform of the 30S subunit. This is Small ribosomal subunit protein bS18 from Lactococcus lactis subsp. cremoris (strain MG1363).